A 231-amino-acid chain; its full sequence is Casein kinase II subunit beta (231 aa).

Belongs to the casein kinase 2 subunit beta family. In terms of assembly, tetramer composed of two alpha chains, one beta chain and one beta' chain. Post-translationally, phosphorylated by alpha subunit.

Regulatory subunit of casein kinase II/CK2. As part of the kinase complex regulates the basal catalytic activity of the alpha subunit a constitutively active serine/threonine-protein kinase that phosphorylates a large number of substrates containing acidic residues C-terminal to the phosphorylated serine or threonine. This chain is Casein kinase II subunit beta, found in Schizosaccharomyces pombe (strain 972 / ATCC 24843) (Fission yeast).